The following is a 107-amino-acid chain: MAQEFVNCKIQSGKVVVFIKPTCPYCRKTQEILSQLPFKRGLLEFVDITATNNTNAIQDYLQQLTGARTVPRVFIGKDCIGGCSDLLSMQQNGELTARLKQIGALQL.

N-acetylalanine is present on A2. In terms of domain architecture, Glutaredoxin spans 3 to 106 (QEFVNCKIQS…ARLKQIGALQ (104 aa)). K9 bears the N6-succinyllysine mark. Disulfide bonds link C23–C26 and C79–C83.

It belongs to the glutaredoxin family.

The protein localises to the cytoplasm. Has a glutathione-disulfide oxidoreductase activity in the presence of NADPH and glutathione reductase. Reduces low molecular weight disulfides and proteins. In Rattus norvegicus (Rat), this protein is Glutaredoxin-1 (Glrx).